A 666-amino-acid polypeptide reads, in one-letter code: NAD(P)H-quinone oxidoreductase subunit 5, organellar chromatophore 1 (666 aa).

A run of 15 helical transmembrane segments spans residues 8-28 (LVWL…FGLI), 41-61 (AALL…MVLA), 90-110 (VDPI…LVMV), 121-141 (SYVR…ALIL), 145-165 (LLEI…LIGF), 190-210 (FLLG…QIVA), 220-240 (GSIP…GPMA), 259-279 (TPIS…FLVA), 293-313 (IIVA…ALIQ), 328-348 (LGYM…FHLI), 396-416 (GITF…AGFW), 428-448 (SYPL…FYMF), 497-517 (TLPL…GSPW), 542-562 (FLPL…IATI), and 643-663 (GRPQ…IVIF).

It belongs to the complex I subunit 5 family. As to quaternary structure, NDH is composed of at least 16 different subunits, 5 of which are encoded in the nucleus.

It is found in the plastid. Its subcellular location is the organellar chromatophore thylakoid membrane. It carries out the reaction a plastoquinone + NADH + (n+1) H(+)(in) = a plastoquinol + NAD(+) + n H(+)(out). It catalyses the reaction a plastoquinone + NADPH + (n+1) H(+)(in) = a plastoquinol + NADP(+) + n H(+)(out). NDH shuttles electrons from NAD(P)H:plastoquinone, via FMN and iron-sulfur (Fe-S) centers, to quinones in the photosynthetic chain and possibly in a chloroplast respiratory chain. The immediate electron acceptor for the enzyme in this species is believed to be plastoquinone. Couples the redox reaction to proton translocation, and thus conserves the redox energy in a proton gradient. In Paulinella chromatophora, this protein is NAD(P)H-quinone oxidoreductase subunit 5, organellar chromatophore 1 (ndhF1).